A 201-amino-acid polypeptide reads, in one-letter code: Large ribosomal subunit protein bL25 (201 aa).

This sequence belongs to the bacterial ribosomal protein bL25 family. CTC subfamily. In terms of assembly, part of the 50S ribosomal subunit; part of the 5S rRNA/L5/L18/L25 subcomplex. Contacts the 5S rRNA. Binds to the 5S rRNA independently of L5 and L18.

This is one of the proteins that binds to the 5S RNA in the ribosome where it forms part of the central protuberance. This chain is Large ribosomal subunit protein bL25, found in Burkholderia lata (strain ATCC 17760 / DSM 23089 / LMG 22485 / NCIMB 9086 / R18194 / 383).